The chain runs to 431 residues: Tol-Pal system protein TolB (431 aa).

The first 26 residues, 1–26, serve as a signal peptide directing secretion; that stretch reads MSLMTKLGFRALVASCLITAGSAANA. The interval 406–431 is disordered; that stretch reads DGSAPPQILSVQGGSVREPSWGPFMQ.

This sequence belongs to the TolB family. In terms of assembly, the Tol-Pal system is composed of five core proteins: the inner membrane proteins TolA, TolQ and TolR, the periplasmic protein TolB and the outer membrane protein Pal. They form a network linking the inner and outer membranes and the peptidoglycan layer.

It localises to the periplasm. Its function is as follows. Part of the Tol-Pal system, which plays a role in outer membrane invagination during cell division and is important for maintaining outer membrane integrity. The protein is Tol-Pal system protein TolB of Burkholderia orbicola (strain AU 1054).